The chain runs to 122 residues: Large ribosomal subunit protein uL14 (122 aa).

The protein belongs to the universal ribosomal protein uL14 family. Part of the 50S ribosomal subunit. Forms a cluster with proteins L3 and L19. In the 70S ribosome, L14 and L19 interact and together make contacts with the 16S rRNA in bridges B5 and B8.

Binds to 23S rRNA. Forms part of two intersubunit bridges in the 70S ribosome. The protein is Large ribosomal subunit protein uL14 of Caulobacter sp. (strain K31).